The chain runs to 316 residues: Secreted effector protein SifB (316 aa).

It belongs to the Sif family.

It is found in the secreted. The protein resides in the host cytoplasm. Effector proteins function to alter host cell physiology and promote bacterial survival in host tissues. The protein is Secreted effector protein SifB (sifB) of Salmonella typhimurium (strain LT2 / SGSC1412 / ATCC 700720).